Consider the following 336-residue polypeptide: Tyrosine recombinase XerC (336 aa).

A Core-binding (CB) domain is found at 14–106 (VARCRWLEPF…SVKSFYRFLL (93 aa)). The Tyr recombinase domain occupies 127–330 (KVPRFVSEEE…TFSRLKEIYD (204 aa)). Catalysis depends on residues R183, K207, H282, R285, and H308. Residue Y317 is the O-(3'-phospho-DNA)-tyrosine intermediate of the active site.

It belongs to the 'phage' integrase family. XerC subfamily. Forms a cyclic heterotetrameric complex composed of two molecules of XerC and two molecules of XerD.

It is found in the cytoplasm. In terms of biological role, site-specific tyrosine recombinase, which acts by catalyzing the cutting and rejoining of the recombining DNA molecules. The XerC-XerD complex is essential to convert dimers of the bacterial chromosome into monomers to permit their segregation at cell division. It also contributes to the segregational stability of plasmids. In Chlorobaculum parvum (strain DSM 263 / NCIMB 8327) (Chlorobium vibrioforme subsp. thiosulfatophilum), this protein is Tyrosine recombinase XerC.